The sequence spans 253 residues: Uroplakin-3b-like protein 1 (253 aa).

Positions 1 to 26 (MGLGRGQSPLLMALLLLLACLQMGMS) are cleaved as a signal peptide. The Extracellular segment spans residues 27-194 (LERISYVPQL…PGPQTAGTVV (168 aa)). 2 N-linked (GlcNAc...) asparagine glycosylation sites follow: Asn-78 and Asn-130. Residues 195-215 (IIAILSVLLAVLLAALLALLI) traverse the membrane as a helical segment. Residues 216 to 253 (FTWYDTCGSTPISGPGELVFVRKYDTHHMSRPSTVGGS) are Cytoplasmic-facing.

This sequence belongs to the uroplakin-3 family.

The protein resides in the membrane. This chain is Uroplakin-3b-like protein 1, found in Bos taurus (Bovine).